Here is a 582-residue protein sequence, read N- to C-terminus: uncharacterized protein (582 aa).

A run of 6 helical transmembrane segments spans residues 17 to 37 (VAML…LPTV), 57 to 77 (LGAV…GAVY), 131 to 151 (MTAT…IMAI), 156 to 176 (ALTW…YWII), 239 to 259 (ALML…LIWF), and 271 to 291 (VGSL…VLMA). Residues 17–300 (VAMLMMLQLV…ATMTLAVLPR (284 aa)) enclose the ABC transmembrane type-1 domain. The ABC transporter domain occupies 335–571 (VRLAGATFTY…CPTYAEFAAS (237 aa)). Position 369 to 376 (369 to 376 (GSTGSGKS)) interacts with ATP.

This sequence belongs to the ABC transporter superfamily.

The protein localises to the cell membrane. This is an uncharacterized protein from Mycobacterium tuberculosis (strain CDC 1551 / Oshkosh).